The primary structure comprises 79 residues: Darcynin (79 aa).

This sequence belongs to the darcynin family.

The protein is Darcynin of Chromobacterium violaceum (strain ATCC 12472 / DSM 30191 / JCM 1249 / CCUG 213 / NBRC 12614 / NCIMB 9131 / NCTC 9757 / MK).